Reading from the N-terminus, the 1881-residue chain is Ankyrin-1 (1881 aa).

The segment at 1–827 is 89 kDa domain; sequence MPYSVGFREA…EDEGEELISF (827 aa). ANK repeat units follow at residues 44-73, 77-106, 110-139, 143-172, 174-201, 205-234, 238-267, 271-300, 304-333, 337-366, 370-399, 403-432, 436-465, 469-498, 502-531, 535-564, 568-597, 601-630, 634-663, 667-696, 700-729, 733-762, and 766-795; these read NGLN…ILET, KGNT…NVNA, KGFT…NQNV, DGFT…KGKV, LPAL…NPDV, TGFT…SVNF, NGIT…QIET, DELT…PIQA, NGLS…EIDD, DHLT…KPNS, NGFT…SIDA, SGLT…SPNV, KVET…KVNA, DDQT…NPNL, AGHT…SQAC, KGFT…HPNA, NGLT…SPHS, NGYT…SANA, QGVT…NGNL, SGLT…MVDA, MGYT…DVNA, LGYS…SPNE, and DGTT…ETSF. A (3S)-3-hydroxyasparagine; by HIF1AN; partial modification is found at N105. N233 bears the (3S)-3-hydroxyasparagine; by HIF1AN; partial mark. S429 carries the phosphoserine modification. 2 positions are modified to (3S)-3-hydroxyasparagine; by HIF1AN; partial: N431 and N464. N629 and N662 each carry (3S)-3-hydroxyasparagine; by HIF1AN; partial. Position 695 is a (3S)-3-hydroxyaspartate; by HIF1AN; partial (D695). Residue N728 is modified to (3S)-3-hydroxyasparagine; by HIF1AN; partial. Residue S759 is modified to Phosphoserine. Position 761 is a (3S)-3-hydroxyasparagine; by HIF1AN; partial (N761). S781, S817, S834, and S856 each carry phosphoserine. The disordered stretch occupies residues 875–904; it reads EEQEQASKEYDEDSLIPSSPATETSDNISP. The segment covering 890–904 has biased composition (polar residues); that stretch reads IPSSPATETSDNISP. ZU5 domains lie at 913–1068 and 1070–1216; these read FLVS…IMSR and CQDY…LSDC. T961 carries the post-translational modification Phosphothreonine. Y1073 is subject to Phosphotyrosine. S1082 is subject to Phosphoserine. The segment at 1234 to 1362 is UPA domain; that stretch reads TAVPYMAKFV…QHILCHLNIT (129 aa). Phosphothreonine is present on residues T1378 and T1380. Positions 1383–1881 are 55 kDa regulatory domain; the sequence is ALRYSILSES…SKDHTSTPNP (499 aa). 3 positions are modified to phosphoserine: S1390, S1392, and S1396. T1400 is subject to Phosphothreonine. In terms of domain architecture, Death spans 1403 to 1487; the sequence is AEMKMAVISE…EIVNMLEGSG (85 aa). Residues S1428 and S1486 each carry the phosphoserine modification. The tract at residues 1486-1510 is disordered; that stretch reads SGRQSRNLKPDRRHTDRDYSLSPSQ. Basic and acidic residues predominate over residues 1493-1504; that stretch reads LKPDRRHTDRDY. Residues S1523 and S1533 each carry the phosphoserine modification. The tract at residues 1583 to 1613 is disordered; it reads SSLECSKAEDSDATGHEWKLEGALSEEPRGP. The span at 1588 to 1612 shows a compositional bias: basic and acidic residues; sequence SKAEDSDATGHEWKLEGALSEEPRG. The residue at position 1617 (S1617) is a Phosphoserine. Disordered regions lie at residues 1637-1703, 1718-1791, and 1840-1859; these read LLEQ…LQDW, QGSW…EAKN, and ADAA…EDPS. A compositionally biased stretch (basic and acidic residues) spans 1642 to 1658; the sequence is EGQRSEEKLPGSKRQDD. S1666, S1671, S1686, S1690, and S1696 each carry phosphoserine. Positions 1683 to 1694 are enriched in polar residues; it reads ITHSPTVSQVTE. Composition is skewed to polar residues over residues 1718–1739 and 1758–1771; these read QGSW…STMT and SEHT…AESS. The span at 1772–1781 shows a compositional bias: basic and acidic residues; it reads QADRDRRQQG.

Component of the ankyrin-1 complex in the erythrocyte, composed of ANK1, RHCE, RHAG, SLC4A1, EPB42, GYPA, GYPB and AQP1. Interacts with a number of integral membrane proteins and cytoskeletal proteins. Interacts (via N-terminus) with SPTB/spectrin (beta chain). Also interacts with TTN/titin. Isoform Mu17 interacts with OBSCN isoform 3/obscurin. Interacts with HIF1AN. Interacts (via ANK 1-5 repeats) with RHCE; this interaction mediates the primary membrane attachment site for ANK1. Interacts (via ANK 1-2 repeats) with AQP1 (via the N-terminal). Interacts (via ANK 1-13 repeats) with EPB42. Interacts directly with SLC4A1 (via the cytoplasmic domain); this interaction is mediated by the SLC4A1 Band 3-II and Band 3-III dimers. Regulated by phosphorylation. In terms of processing, palmitoylated. Post-translationally, hydroxylated by HIF1AN at several asparagine and 1 aspartate residue within ANK repeat region. Hydroxylation seems to increase the conformational stability of this region and may also modulate protein-protein interactions mediated by the ANK repeat region. (Microbial infection) Probably cleaved by P.falciparum SERA6; the cleavage probably causes the disruption of the actin cytoskeleton and the rupture of the erythrocyte cell membrane releasing the merozoites. In terms of tissue distribution, isoform Mu17, isoform Mu18, isoform Mu19 and isoform Mu20 are expressed in skeletal muscle. Isoform Br21 is expressed in brain.

It is found in the cytoplasm. The protein localises to the cytoskeleton. Its subcellular location is the membrane. The protein resides in the myofibril. It localises to the sarcomere. It is found in the m line. The protein localises to the sarcoplasmic reticulum. Functionally, component of the ankyrin-1 complex, a multiprotein complex involved in the stability and shape of the erythrocyte membrane. Attaches integral membrane proteins to cytoskeletal elements; binds to the erythrocyte membrane protein band 4.2, to Na-K ATPase, to the lymphocyte membrane protein GP85, and to the cytoskeletal proteins fodrin, tubulin, vimentin and desmin. Erythrocyte ankyrins also link spectrin (beta chain) to the cytoplasmic domain of the erythrocytes anion exchange protein; they retain most or all of these binding functions. In terms of biological role, together with obscurin in skeletal muscle may provide a molecular link between the sarcoplasmic reticulum and myofibrils. The chain is Ankyrin-1 from Homo sapiens (Human).